Consider the following 286-residue polypeptide: ATP synthase gamma chain (286 aa).

Belongs to the ATPase gamma chain family. F-type ATPases have 2 components, CF(1) - the catalytic core - and CF(0) - the membrane proton channel. CF(1) has five subunits: alpha(3), beta(3), gamma(1), delta(1), epsilon(1). CF(0) has three main subunits: a, b and c.

The protein resides in the cell inner membrane. Produces ATP from ADP in the presence of a proton gradient across the membrane. The gamma chain is believed to be important in regulating ATPase activity and the flow of protons through the CF(0) complex. The sequence is that of ATP synthase gamma chain from Pseudomonas putida (strain W619).